We begin with the raw amino-acid sequence, 688 residues long: DNA topoisomerase 1 (688 aa).

A Toprim domain is found at 3–113 (ENLVIVESPA…TENRVVFNEI (111 aa)). Mg(2+) is bound by residues Glu9 and Asp82. A Topo IA-type catalytic domain is found at 129 to 556 (EMELVDAQQA…FYSSFKQDVE (428 aa)). Residues 163–168 (SAGRVQ) are interaction with DNA. Tyr298 functions as the O-(5'-phospho-DNA)-tyrosine intermediate in the catalytic mechanism. Residues 322–349 (YGNDYTSNRKSKGQGDQDAHEAIRPSST) form a disordered region. Residues 334-344 (GQGDQDAHEAI) show a composition bias toward basic and acidic residues. C4-type zinc fingers lie at residues 576 to 602 (CEVC…FPDC), 616 to 644 (CPKC…YPEC), and 657 to 680 (CPKC…CSNC).

It belongs to the type IA topoisomerase family. In terms of assembly, monomer. The cofactor is Mg(2+).

The catalysed reaction is ATP-independent breakage of single-stranded DNA, followed by passage and rejoining.. Its function is as follows. Releases the supercoiling and torsional tension of DNA, which is introduced during the DNA replication and transcription, by transiently cleaving and rejoining one strand of the DNA duplex. Introduces a single-strand break via transesterification at a target site in duplex DNA. The scissile phosphodiester is attacked by the catalytic tyrosine of the enzyme, resulting in the formation of a DNA-(5'-phosphotyrosyl)-enzyme intermediate and the expulsion of a 3'-OH DNA strand. The free DNA strand then undergoes passage around the unbroken strand, thus removing DNA supercoils. Finally, in the religation step, the DNA 3'-OH attacks the covalent intermediate to expel the active-site tyrosine and restore the DNA phosphodiester backbone. This Staphylococcus saprophyticus subsp. saprophyticus (strain ATCC 15305 / DSM 20229 / NCIMB 8711 / NCTC 7292 / S-41) protein is DNA topoisomerase 1.